Reading from the N-terminus, the 467-residue chain is ATP synthase subunit beta (467 aa).

156 to 163 (GGAGVGKT) contributes to the ATP binding site.

Belongs to the ATPase alpha/beta chains family. In terms of assembly, F-type ATPases have 2 components, CF(1) - the catalytic core - and CF(0) - the membrane proton channel. CF(1) has five subunits: alpha(3), beta(3), gamma(1), delta(1), epsilon(1). CF(0) has three main subunits: a(1), b(2) and c(9-12). The alpha and beta chains form an alternating ring which encloses part of the gamma chain. CF(1) is attached to CF(0) by a central stalk formed by the gamma and epsilon chains, while a peripheral stalk is formed by the delta and b chains.

It localises to the cell inner membrane. The catalysed reaction is ATP + H2O + 4 H(+)(in) = ADP + phosphate + 5 H(+)(out). Produces ATP from ADP in the presence of a proton gradient across the membrane. The catalytic sites are hosted primarily by the beta subunits. The polypeptide is ATP synthase subunit beta (Cupriavidus taiwanensis (strain DSM 17343 / BCRC 17206 / CCUG 44338 / CIP 107171 / LMG 19424 / R1) (Ralstonia taiwanensis (strain LMG 19424))).